We begin with the raw amino-acid sequence, 415 residues long: tRNA (cytosine(38)-C(5))-methyltransferase (415 aa).

An SAM-dependent MTase C5-type domain is found at 4-396; that stretch reads LRVLELYSGI…TVLCEGFGNA (393 aa). Residues 13–15, Asp34, 57–58, and Ser76 contribute to the S-adenosyl-L-methionine site; these read IGG and IE. Cys79 is an active-site residue. Ser376 lines the S-adenosyl-L-methionine pocket.

This sequence belongs to the class I-like SAM-binding methyltransferase superfamily. C5-methyltransferase family. As to expression, highly expressed in thymus, testis, and at much lower levels in spleen, lung, brain, heart, kidney, liver, skeletal muscle and embryonic stem cells.

The protein resides in the cytoplasm. It carries out the reaction cytidine(38) in tRNA + S-adenosyl-L-methionine = 5-methylcytidine(38) in tRNA + S-adenosyl-L-homocysteine + H(+). Functionally, specifically methylates cytosine 38 in the anticodon loop of tRNA(Asp). Has higher activity on tRNA(Asp) modified with queuosine at position 34. In Mus musculus (Mouse), this protein is tRNA (cytosine(38)-C(5))-methyltransferase (Trdmt1).